A 151-amino-acid polypeptide reads, in one-letter code: uncharacterized protein (151 aa).

The 149-residue stretch at 3-151 folds into the N-acetyltransferase domain; the sequence is IKIDDLTGRQ…PNSVFMTKKL (149 aa).

This sequence belongs to the acetyltransferase family.

This is an uncharacterized protein from Bacillus subtilis (strain 168).